Reading from the N-terminus, the 315-residue chain is MSTKDLFAEPNLKQITVWARGVVMNKDARDIVVALTEAAAKEGKYVQAWENYVDLPDRIYVPVRAYARISSDPIESKYIYENETPDIVVLVEESLIKGVPILKGIRPGSTLVVNTKRSIDTILEFLGDTGNLAQIVTVDANSMAEAVMTLSGAEGATDATGIGAGIAAPIAGAVVKATGIVDVENLAAVVKNPAAMRRGYAEAQVRQLPPHEAVEEAAVSATELLRQMPFAGTVPSPVTENEGMVTGNWRIQRPIIDREACTECYTCWIYCPDSCITRTEEGPVFNMKYCKGCGLCTAVCPSGALTNVPELDFKD.

2 4Fe-4S ferredoxin-type domains span residues glutamine 252 to glutamate 280 and glutamate 281 to glutamate 310. [4Fe-4S] cluster-binding residues include cysteine 261, cysteine 264, cysteine 267, cysteine 271, cysteine 290, cysteine 293, cysteine 296, and cysteine 300.

In terms of assembly, dimer of heterotrimer of one alpha, one beta and one delta subunit. [4Fe-4S] cluster is required as a cofactor.

It carries out the reaction oxidized 2[4Fe-4S]-[ferredoxin] + oxalate = reduced 2[4Fe-4S]-[ferredoxin] + 2 CO2. In terms of biological role, catalyzes the anaerobic oxidation of oxalate using a broad range of electron acceptors, including ferredoxin and the nickel-dependent carbon monoxide dehydrogenase. Does not require coenzyme A as cosubstrate. Enables anaerobic growth on oxalate which is used as energy source by the bacteria. The sequence is that of Oxalate oxidoreductase subunit delta from Moorella thermoacetica (strain ATCC 39073 / JCM 9320).